Here is a 199-residue protein sequence, read N- to C-terminus: Dephospho-CoA kinase (199 aa).

Residues 3–199 (RIGLTGGIGS…HCKYLQIAQT (197 aa)) form the DPCK domain. Residue 11–16 (GSGKST) coordinates ATP.

Belongs to the CoaE family.

Its subcellular location is the cytoplasm. The enzyme catalyses 3'-dephospho-CoA + ATP = ADP + CoA + H(+). It functions in the pathway cofactor biosynthesis; coenzyme A biosynthesis; CoA from (R)-pantothenate: step 5/5. Catalyzes the phosphorylation of the 3'-hydroxyl group of dephosphocoenzyme A to form coenzyme A. In Coxiella burnetii (strain RSA 493 / Nine Mile phase I), this protein is Dephospho-CoA kinase.